We begin with the raw amino-acid sequence, 270 residues long: ES1 protein, mitochondrial (270 aa).

Expressed specifically in the inner segments of cone photoreceptor cells of the retina (at protein level).

Its subcellular location is the mitochondrion. In terms of biological role, plays a role in promoting mitochondrial enlargement in cone photoreceptor cells in a fusion-independent and ATP-dependent manner. The polypeptide is ES1 protein, mitochondrial (Danio rerio (Zebrafish)).